Here is a 74-residue protein sequence, read N- to C-terminus: Large ribosomal subunit protein uL29 (74 aa).

It belongs to the universal ribosomal protein uL29 family.

In Streptomyces coelicolor (strain ATCC BAA-471 / A3(2) / M145), this protein is Large ribosomal subunit protein uL29 (rpmC).